Reading from the N-terminus, the 87-residue chain is Small ribosomal subunit protein bS20 (87 aa).

Residues 1–29 (MANTAQARKRARQAVKQNAHNSSQRSTLR) are disordered. The segment covering 20–29 (HNSSQRSTLR) has biased composition (polar residues).

The protein belongs to the bacterial ribosomal protein bS20 family.

In terms of biological role, binds directly to 16S ribosomal RNA. The protein is Small ribosomal subunit protein bS20 of Janthinobacterium sp. (strain Marseille) (Minibacterium massiliensis).